The following is a 211-amino-acid chain: Large ribosomal subunit protein uL3 (211 aa).

The protein belongs to the universal ribosomal protein uL3 family. Part of the 50S ribosomal subunit. Forms a cluster with proteins L14 and L19.

One of the primary rRNA binding proteins, it binds directly near the 3'-end of the 23S rRNA, where it nucleates assembly of the 50S subunit. The polypeptide is Large ribosomal subunit protein uL3 (Geobacter sp. (strain M21)).